The chain runs to 69 residues: Putative membrane protein insertion efficiency factor (69 aa).

It belongs to the UPF0161 family.

The protein localises to the cell membrane. Its function is as follows. Could be involved in insertion of integral membrane proteins into the membrane. The polypeptide is Putative membrane protein insertion efficiency factor (Alkaliphilus oremlandii (strain OhILAs) (Clostridium oremlandii (strain OhILAs))).